The following is a 541-amino-acid chain: Catalase (541 aa).

The interval 1–20 (MPQTKGKPHEEQLEQYKNSQ) is disordered. Catalysis depends on residues H74 and N147. Y357 provides a ligand contact to heme.

The protein belongs to the catalase family. Heme serves as cofactor.

The protein localises to the peroxisome matrix. It carries out the reaction 2 H2O2 = O2 + 2 H2O. Its function is as follows. Catalyzes the degradation of hydrogen peroxide (H(2)O(2)) generated by peroxisomal oxidases to water and oxygen, thereby protecting cells from the toxic effects of hydrogen peroxide. In Ascaris suum (Pig roundworm), this protein is Catalase (CAT).